The following is a 672-amino-acid chain: Nuclear hormone receptor family member nhr-5 (672 aa).

Residues 1 to 19 show a composition bias toward low complexity; the sequence is MSSGGNSSNVNRNSGSSNV. Residues 1–38 form a disordered region; it reads MSSGGNSSNVNRNSGSSNVITLNDSDEETEDSNLGSSS. A DNA-binding region (nuclear receptor) is located at residues 40 to 115; the sequence is TNLCKVCGAE…EGMNPAYVRP (76 aa). NR C4-type zinc fingers lie at residues 43-63 and 79-98; these read CKVCGAEKAALHYGALSCVGC and CAANGECTVSVLQKTQCRSC. An NR LBD domain is found at 155 to 424; the sequence is EMRTILMTLL…PLLTDLFGCF (270 aa). The segment at 550 to 577 is disordered; it reads NIQGPSHLPQCGSTVTQRPTVPSSTTSS. Residues 562 to 577 are compositionally biased toward low complexity; sequence STVTQRPTVPSSTTSS.

Belongs to the nuclear hormone receptor family.

Its subcellular location is the nucleus. In terms of biological role, orphan nuclear receptor. In Caenorhabditis elegans, this protein is Nuclear hormone receptor family member nhr-5 (nhr-5).